Here is a 338-residue protein sequence, read N- to C-terminus: MTTGPATPPQTNHAEDRTEWPIQVLRAAPETYLLQEILKLAEVAIDTDGHPPFSDQTLIQLRSANAPLLILLSYVPAAPEVPAALAGVAVVLEHDGQPASGTLELVVHPTYRNQGVGQVLLKSLQSARGFESLNAWSHGSHAAAQQLADQFGFEAVRALRRLRLALDAGHQLPAASLPTNISLRSFVPDQDEAAWLAVNAAAFAHHPEQGETSLADLKSLMEEQWFDAAGFLLAVDETDQIMGFHWTKIHAAPAGHQAIGEVYVVGIAPAAQGKGLGKALTLAGIDYLQKKGLSSIMLYVDADNTAAVSLYQSLGFARWDADTMYSYPSATNSNNKFQ.

N-acetyltransferase domains lie at 29 to 173 (PETY…HQLP) and 181 to 338 (ISLR…NKFQ). A 1D-myo-inositol 2-(L-cysteinylamino)-2-deoxy-alpha-D-glucopyranoside-binding site is contributed by Asp55. 105 to 107 (LVV) is a binding site for acetyl-CoA. The 1D-myo-inositol 2-(L-cysteinylamino)-2-deoxy-alpha-D-glucopyranoside site is built by Glu208, Lys248, and Glu261. Residues 265-267 (VGI) and 272-278 (QGKGLGK) contribute to the acetyl-CoA site. Residue Tyr299 coordinates 1D-myo-inositol 2-(L-cysteinylamino)-2-deoxy-alpha-D-glucopyranoside.

It belongs to the acetyltransferase family. MshD subfamily. In terms of assembly, monomer.

It catalyses the reaction 1D-myo-inositol 2-(L-cysteinylamino)-2-deoxy-alpha-D-glucopyranoside + acetyl-CoA = mycothiol + CoA + H(+). In terms of biological role, catalyzes the transfer of acetyl from acetyl-CoA to desacetylmycothiol (Cys-GlcN-Ins) to form mycothiol. In Renibacterium salmoninarum (strain ATCC 33209 / DSM 20767 / JCM 11484 / NBRC 15589 / NCIMB 2235), this protein is Mycothiol acetyltransferase.